Reading from the N-terminus, the 137-residue chain is Putative pre-16S rRNA nuclease (137 aa).

This sequence belongs to the YqgF nuclease family.

It is found in the cytoplasm. In terms of biological role, could be a nuclease involved in processing of the 5'-end of pre-16S rRNA. In Actinobacillus pleuropneumoniae serotype 5b (strain L20), this protein is Putative pre-16S rRNA nuclease.